The primary structure comprises 44 residues: Thymosin beta-12 (44 aa).

Basic and acidic residues-rich tracts occupy residues 1–25 (MSDK…ETQE) and 33–44 (ETIEQEKAAATS). The tract at residues 1 to 44 (MSDKPDISEVTSFDKTKLKKTETQEKNPLPSKETIEQEKAAATS) is disordered. Serine 2 bears the N-acetylserine mark.

It belongs to the thymosin beta family.

The protein resides in the cytoplasm. It is found in the cytoskeleton. In terms of biological role, plays an important role in the organization of the cytoskeleton. Binds to and sequesters actin monomers (G actin) and therefore inhibits actin polymerization. This is Thymosin beta-12 from Lateolabrax japonicus (Japanese sea perch).